The following is a 504-amino-acid chain: Glucose-6-phosphate isomerase (504 aa).

Residue Glu-333 is the Proton donor of the active site. Active-site residues include His-364 and Lys-473.

The protein belongs to the GPI family.

It localises to the cytoplasm. It catalyses the reaction alpha-D-glucose 6-phosphate = beta-D-fructose 6-phosphate. It participates in carbohydrate biosynthesis; gluconeogenesis. The protein operates within carbohydrate degradation; glycolysis; D-glyceraldehyde 3-phosphate and glycerone phosphate from D-glucose: step 2/4. Functionally, catalyzes the reversible isomerization of glucose-6-phosphate to fructose-6-phosphate. The sequence is that of Glucose-6-phosphate isomerase from Stenotrophomonas maltophilia (strain R551-3).